We begin with the raw amino-acid sequence, 416 residues long: Serine hydroxymethyltransferase (416 aa).

(6S)-5,6,7,8-tetrahydrofolate-binding positions include L121 and 125–127 (GHL). An N6-(pyridoxal phosphate)lysine modification is found at K230. A (6S)-5,6,7,8-tetrahydrofolate-binding site is contributed by 355–357 (SPF).

This sequence belongs to the SHMT family. As to quaternary structure, homodimer. Requires pyridoxal 5'-phosphate as cofactor.

It localises to the cytoplasm. It catalyses the reaction (6R)-5,10-methylene-5,6,7,8-tetrahydrofolate + glycine + H2O = (6S)-5,6,7,8-tetrahydrofolate + L-serine. The protein operates within one-carbon metabolism; tetrahydrofolate interconversion. It functions in the pathway amino-acid biosynthesis; glycine biosynthesis; glycine from L-serine: step 1/1. Catalyzes the reversible interconversion of serine and glycine with tetrahydrofolate (THF) serving as the one-carbon carrier. This reaction serves as the major source of one-carbon groups required for the biosynthesis of purines, thymidylate, methionine, and other important biomolecules. Also exhibits THF-independent aldolase activity toward beta-hydroxyamino acids, producing glycine and aldehydes, via a retro-aldol mechanism. The polypeptide is Serine hydroxymethyltransferase (Streptococcus thermophilus (strain CNRZ 1066)).